The chain runs to 331 residues: Ketol-acid reductoisomerase (NADP(+)) (331 aa).

The 181-residue stretch at 2-182 folds into the KARI N-terminal Rossmann domain; the sequence is ARMYYDEDAN…GGTRGGVLET (181 aa). Residues 25–28, S51, S53, and 83–86 each bind NADP(+); these read YGSQ and DEVQ. The active site involves H108. Residue G134 coordinates NADP(+). In terms of domain architecture, KARI C-terminal knotted spans 183-328; the sequence is TFREETETDL…KDLRAMFSWL (146 aa). Residues D191, E195, E227, and E231 each contribute to the Mg(2+) site. S252 is a binding site for substrate.

Belongs to the ketol-acid reductoisomerase family. Mg(2+) serves as cofactor.

The enzyme catalyses (2R)-2,3-dihydroxy-3-methylbutanoate + NADP(+) = (2S)-2-acetolactate + NADPH + H(+). The catalysed reaction is (2R,3R)-2,3-dihydroxy-3-methylpentanoate + NADP(+) = (S)-2-ethyl-2-hydroxy-3-oxobutanoate + NADPH + H(+). It functions in the pathway amino-acid biosynthesis; L-isoleucine biosynthesis; L-isoleucine from 2-oxobutanoate: step 2/4. The protein operates within amino-acid biosynthesis; L-valine biosynthesis; L-valine from pyruvate: step 2/4. Involved in the biosynthesis of branched-chain amino acids (BCAA). Catalyzes an alkyl-migration followed by a ketol-acid reduction of (S)-2-acetolactate (S2AL) to yield (R)-2,3-dihydroxy-isovalerate. In the isomerase reaction, S2AL is rearranged via a Mg-dependent methyl migration to produce 3-hydroxy-3-methyl-2-ketobutyrate (HMKB). In the reductase reaction, this 2-ketoacid undergoes a metal-dependent reduction by NADPH to yield (R)-2,3-dihydroxy-isovalerate. The sequence is that of Ketol-acid reductoisomerase (NADP(+)) from Nostoc sp. (strain PCC 7120 / SAG 25.82 / UTEX 2576).